We begin with the raw amino-acid sequence, 186 residues long: ADP-ribosylation factor-like protein 8B (186 aa).

Residues 1-19 (MLALISRLLDWFRSLFWKE) constitute an intramembrane region (note=Mediates targeting to membranes). GTP-binding positions include 29-35 (QYSGKTT), 71-75 (DIGGQ), and 130-133 (NKRD). Residue Lys141 forms a Glycyl lysine isopeptide (Lys-Gly) (interchain with G-Cter in ubiquitin) linkage.

Belongs to the small GTPase superfamily. Arf family. As to quaternary structure, interacts with tubulin. Interacts with BORCS5; recruits ARL8B to lysosomes. Interacts with VPS41; the interaction mediates the recruitment of the HOPS complex to lysosomes. Interacts (GTP-bound form) with PLEKHM2 (via RUN domain); the interaction is required to recruit the motor protein kinesin-1 on lysosomes. Interacts (GTP-bound form) with PLEKHM1 (via RUN domain); the interaction is required for PLEKHM1 localization to lysosomes and for ARL8B function in delivery and degradation of endocytic and autophagic cargo in lysosomes. PLEKHM1 and PLEKHM2 compete for interaction with ARL8B. Interacts (GTP-bound form) with RUFY1; the interaction is required for RUFY1 endosomal location. When GTP-bound, interacts with RUFY3 and RUFY4, but not with RUFY1, nor RUFY2. Post-translationally, ubiquitinated at Lys-141 by RNF167, leading to its degradation.

It is found in the late endosome membrane. The protein localises to the lysosome membrane. It localises to the cytoplasm. Its subcellular location is the cytoskeleton. The protein resides in the spindle. It is found in the cell projection. The protein localises to the axon. It localises to the synapse. Its subcellular location is the cytolytic granule membrane. The protein resides in the early endosome membrane. The catalysed reaction is GTP + H2O = GDP + phosphate + H(+). Its function is as follows. Small GTPase which cycles between active GTP-bound and inactive GDP-bound states. In its active state, binds to a variety of effector proteins playing a key role in the regulation of lysosomal positioning which is important for nutrient sensing, natural killer cell-mediated cytotoxicity and antigen presentation. Along with its effectors, orchestrates lysosomal transport and fusion. Localizes specifically to lysosomal membranes and mediates anterograde lysosomal motility by recruiting PLEKHM2, which in turn recruits the motor protein kinesin-1 on lysosomes. Required for lysosomal and cytolytic granule exocytosis. Critical factor involved in NK cell-mediated cytotoxicity. Drives the polarization of cytolytic granules and microtubule-organizing centers (MTOCs) toward the immune synapse between effector NK lymphocytes and target cells. In neurons, mediates the anterograde axonal long-range transport of presynaptic lysosome-related vesicles required for presynaptic biogenesis and synaptic function. Also acts as a regulator of endosome to lysosome trafficking pathways of special significance for host defense. Recruits RUFY1 onto early endosomes regulating endosomes to trans-Golgi network proteins retrieval. Regulates cargo trafficking to lysosomes by binding to PLEKHM1 and recruiting the HOPS subunit VPS41, resulting in functional assembly of the HOPS complex on lysosomal membranes. Plays an important role in cargo delivery to lysosomes for antigen presentation and microbial killing. Directs the intersection of CD1d with lipid antigens in lysosomes, and plays a role in intersecting phagosomes with lysosomes to generate phagolysosomes that kill microbes. Involved in the process of MHC II presentation. Regulates the delivery of antigens to lysosomes and the formation of MHC II-peptide complexes through the recruitment of the HOPS complex to lysosomes allowing the fusion of late endosomes to lysosomes. May play a role in chromosome segregation. The chain is ADP-ribosylation factor-like protein 8B (ARL8B) from Bos taurus (Bovine).